We begin with the raw amino-acid sequence, 284 residues long: D-tagatose-1,6-bisphosphate aldolase subunit GatY (284 aa).

The Proton donor role is filled by aspartate 82. The Zn(2+) site is built by histidine 83 and histidine 180. Glycine 181 contributes to the dihydroxyacetone phosphate binding site. Histidine 208 is a binding site for Zn(2+). Dihydroxyacetone phosphate contacts are provided by residues 209–211 and 230–233; these read GAS and NVAT.

Belongs to the class II fructose-bisphosphate aldolase family. TagBP aldolase GatY subfamily. Forms a complex with GatZ. The cofactor is Zn(2+).

The catalysed reaction is D-tagatofuranose 1,6-bisphosphate = D-glyceraldehyde 3-phosphate + dihydroxyacetone phosphate. Its pathway is carbohydrate metabolism; D-tagatose 6-phosphate degradation; D-glyceraldehyde 3-phosphate and glycerone phosphate from D-tagatose 6-phosphate: step 2/2. Catalytic subunit of the tagatose-1,6-bisphosphate aldolase GatYZ, which catalyzes the reversible aldol condensation of dihydroxyacetone phosphate (DHAP or glycerone-phosphate) with glyceraldehyde 3-phosphate (G3P) to produce tagatose 1,6-bisphosphate (TBP). Requires GatZ subunit for full activity and stability. Is involved in the catabolism of galactitol. This is D-tagatose-1,6-bisphosphate aldolase subunit GatY from Escherichia coli (strain SMS-3-5 / SECEC).